The sequence spans 108 residues: Nucleoid-associated protein Csal_1459 (108 aa).

A compositionally biased stretch (basic and acidic residues) spans 84–93 (EETSRGRMEE). Positions 84–108 (EETSRGRMEEATEGMNLPPGFKMPF) are disordered.

It belongs to the YbaB/EbfC family. As to quaternary structure, homodimer.

The protein localises to the cytoplasm. It localises to the nucleoid. In terms of biological role, binds to DNA and alters its conformation. May be involved in regulation of gene expression, nucleoid organization and DNA protection. In Chromohalobacter salexigens (strain ATCC BAA-138 / DSM 3043 / CIP 106854 / NCIMB 13768 / 1H11), this protein is Nucleoid-associated protein Csal_1459.